The following is a 310-amino-acid chain: MRRLIPILLGSLVLSLSILVAPAASWAYPFWAQQNYDNPREATGKIVCANCHLAQKTTQAEVPQSVLPDSVFKAVVKIPYKKDTTEISSDGSDVPLQVGAVVMLPDGFRLAPQDRWSEEIKEETKGVFFTQYSEEKENILLVGPLPGDNNKEIVFPILSPDPATDSSIQFGKYSIHVGGNRGRGQILPTGEKTNNNAFTATEAGTITSIKSGKNGESDIKLKTDSGKVISETIPAGPSLLVKVDDKVEAGAPLTSDPNSGGFGQLDTEVVLQNPVRIYGLLAFFVAVSLAQILLVLKKKQVEKVQAAEGI.

Residues 1–23 (MRRLIPILLGSLVLSLSILVAPA) form the signal peptide. Positions 28, 48, 51, and 52 each coordinate heme. A helical transmembrane segment spans residues 277–297 (IYGLLAFFVAVSLAQILLVLK).

It belongs to the cytochrome f family. As to quaternary structure, the 4 large subunits of the cytochrome b6-f complex are cytochrome b6, subunit IV (17 kDa polypeptide, PetD), cytochrome f and the Rieske protein, while the 4 small subunits are PetG, PetL, PetM and PetN. The complex functions as a dimer. Heme is required as a cofactor.

The protein resides in the cellular thylakoid membrane. Component of the cytochrome b6-f complex, which mediates electron transfer between photosystem II (PSII) and photosystem I (PSI), cyclic electron flow around PSI, and state transitions. The chain is Cytochrome f from Prochlorococcus marinus (strain MIT 9313).